The sequence spans 174 residues: Stigma-specific STIG1-like protein 4 (174 aa).

An N-terminal signal peptide occupies residues 1–25 (MMSIKLTLCALIFFLLNSLLHHVLG). Positions 140-174 (PSSQPGKRHRRHKFHRPRPPPSPDSKLNYDDHDDE) are disordered. Residues 145–157 (GKRHRRHKFHRPR) show a composition bias toward basic residues.

This sequence belongs to the STIG1 family.

It is found in the secreted. Functionally, endosperm-specific cysteine-rich protein that acts downstream of BHLH95/ZOU to modify the interface between embryo and endosperm and mediate the separation of these two tissues during seed development. Necessary for the biogenesis of the embryo sheath, an extracuticular endosperm-derived structure at the surface of the embryo. Required for the separation of embryo and endosperm, and for normal progression of the embryo through the endosperm tissue. Required for the formation of a normal embryonic cuticle. The protein is Stigma-specific STIG1-like protein 4 of Arabidopsis thaliana (Mouse-ear cress).